Consider the following 55-residue polypeptide: Sporulation killing factor (55 aa).

A propeptide spanning residues 1 to 29 is cleaved from the precursor; the sequence is MKRNQKEWESVSKKGLMKPGGTSIVKAAG. Cysteine 30 and cysteine 45 are oxidised to a cystine. The segment at residues 30 to 55 is a cross-link (cyclopeptide (Cys-Ile)); it reads CMGCWASKSIAMTRVCALPHPAMRAI. The segment at residues 33–41 is a cross-link (2-(S-cysteinyl)-methionine (Cys-Met)); that stretch reads CWASKSIAM.

Post-translationally, this is a cyclic peptide. The first step in SKF maturation is probably thioether bond formation.

The protein localises to the secreted. Its function is as follows. Produces a 26-residue extracellular sporulation killing factor (SKF) that induces the lysis of other B.subtilis cells that have not entered the sporulation pathway, providing a source of nutrients to support sporulation, and at the same time delaying commitment to the energetically expensive and irreversible onset of sporulation. Can also inhibit growth of other bacteria at high concentrations. Addition of SKF to solid cultures induces killing, but it is much less effective than SDP (AC O34344). Has a role in protecting the secreted lipase LipA against proteolysis, either by modulating its folding or by acting as a protease inhibitor. This is Sporulation killing factor from Bacillus subtilis (strain 168).